Here is an 848-residue protein sequence, read N- to C-terminus: Protein NETWORKED 2C (848 aa).

One can recognise an NAB domain in the interval 10–90 (YSWWWASHVR…ERYDHISKEL (81 aa)). The interval 108-141 (FAMNEDDDDDAPVSPRHHKNKTSNKNVPKVPDLP) is disordered. Coiled-coil stretches lie at residues 172 to 204 (LSKT…SYEN), 241 to 278 (EAQI…SRKQ), 305 to 454 (SEKE…KATN), and 752 to 797 (AKFE…SEEF).

Belongs to the NET family.

Functionally, plant-specific actin binding protein. May be part of a membrane-cytoskeletal adapter complex. The sequence is that of Protein NETWORKED 2C from Arabidopsis thaliana (Mouse-ear cress).